A 55-amino-acid chain; its full sequence is Ribosome biogenesis protein Nop10 (55 aa).

The protein belongs to the NOP10 family.

Involved in ribosome biogenesis; more specifically in 18S rRNA pseudouridylation and in cleavage of pre-rRNA. This is Ribosome biogenesis protein Nop10 from Methanosphaera stadtmanae (strain ATCC 43021 / DSM 3091 / JCM 11832 / MCB-3).